The following is a 496-amino-acid chain: E3 ubiquitin-protein ligase Hakai (496 aa).

Positions 35 to 60 (PNKIKPAPRPQRNMNRIPTKPQPGFD) are disordered. The segment at 104–144 (CDKCGLPIKIYGRMIPCKHVFCYDCALMHEKKADKLCPGTL) adopts an RING-type; degenerate zinc-finger fold. An HYB domain region spans residues 157–215 (CNDPVQRIEQCARGSLFMCSIVQGCKRTYLSQRDLQAHINHRHMRASKPTARPQPEPIH). The C2H2-type zinc-finger motif lies at 173-199 (FMCSIVQGCKRTYLSQRDLQAHINHRH). A compositionally biased stretch (polar residues) spans 304–314 (VPIQDDSNSGA). The segment at 304 to 496 (VPIQDDSNSG…DQARYRPYYQ (193 aa)) is disordered. 3 stretches are compositionally biased toward pro residues: residues 350-360 (APPPPPPPPIS), 380-397 (GPPP…PPPG), and 407-430 (MNHP…PPHH). Positions 434–449 (SSMPQFNEDQGTLSPP) are enriched in polar residues. A compositionally biased stretch (pro residues) spans 464–483 (PRGPPPRMQGPPSQAPMPGP).

It belongs to the Hakai family. As to quaternary structure, homodimer. Interacts with tyrosine-phosphorylated SRC substrates. Component of the WMM complex, a N6-methyltransferase complex composed of a catalytic subcomplex, named MAC, and of an associated subcomplex, named MACOM. Component of the MACOM subcomplex.

The protein resides in the nucleus speckle. It localises to the nucleus. Its subcellular location is the nucleoplasm. The catalysed reaction is S-ubiquitinyl-[E2 ubiquitin-conjugating enzyme]-L-cysteine + [acceptor protein]-L-lysine = [E2 ubiquitin-conjugating enzyme]-L-cysteine + N(6)-ubiquitinyl-[acceptor protein]-L-lysine.. It functions in the pathway protein modification; protein ubiquitination. Functionally, E3 ubiquitin-protein ligase that mediates ubiquitination of several tyrosine-phosphorylated Src substrates. Associated component of the WMM complex, a complex that mediates N6-methyladenosine (m6A) methylation of RNAs, a modification that plays a role in the efficiency of mRNA splicing and RNA processing. This is E3 ubiquitin-protein ligase Hakai from Xenopus laevis (African clawed frog).